The primary structure comprises 301 residues: Putative S-adenosyl-L-methionine-dependent methyltransferase MUL_0450 (301 aa).

S-adenosyl-L-methionine is bound by residues aspartate 127 and aspartate 156–leucine 157.

This sequence belongs to the UPF0677 family.

Functionally, exhibits S-adenosyl-L-methionine-dependent methyltransferase activity. This Mycobacterium ulcerans (strain Agy99) protein is Putative S-adenosyl-L-methionine-dependent methyltransferase MUL_0450.